The following is a 972-amino-acid chain: Cycloisomaltooligosaccharide glucanotransferase (972 aa).

The first 38 residues, 1 to 38, serve as a signal peptide directing secretion; it reads MVRFMYALRKRRLSLLLAMSLLVMCVASVVSPPPQALA. CBM6 domains lie at 421–546 and 748–871; these read TRYE…LTLG and DIYE…LDLD.

The protein belongs to the glycosyl hydrolase 66 family. In terms of assembly, monomer.

It catalyses the reaction cyclizes part of a (1-&gt;6)-alpha-D-glucan chain by formation of a (1-&gt;6)-alpha-D-glucosidic bond.. Its function is as follows. Produces cycloisomaltooligosaccharide from dextran containing 7, 8 or 9 glucose units. The enzyme is specific for (1-&gt;6)-alpha-D-glucans (dextrans) and, without activity toward (1-&gt;4)-alpha-D-glucans, such as amylose. It also has no activity on oligosaccharides, such as amylopectin and pullulan, containing (1-&gt;6)-alpha-D-glucosidic linkages at branch points. In Niallia circulans (Bacillus circulans), this protein is Cycloisomaltooligosaccharide glucanotransferase.